The primary structure comprises 215 residues: Thymidylate kinase (215 aa).

13 to 20 is a binding site for ATP; sequence GLEGAGKS.

The protein belongs to the thymidylate kinase family.

The catalysed reaction is dTMP + ATP = dTDP + ADP. Phosphorylation of dTMP to form dTDP in both de novo and salvage pathways of dTTP synthesis. This chain is Thymidylate kinase, found in Shewanella frigidimarina (strain NCIMB 400).